The chain runs to 207 residues: NAD(P)H dehydrogenase (quinone) (207 aa).

The Flavodoxin-like domain maps to 3 to 194; it reads VQIIFYSMYG…EMAKFQGRHV (192 aa). FMN-binding positions include 9–14 and 82–84; these read SMYGHI and TRF. Y11 lines the NAD(+) pocket. W102 is a substrate binding site. Residues 117–123 and H138 each bind FMN; that span reads STATQHG.

This sequence belongs to the WrbA family. The cofactor is FMN.

It catalyses the reaction a quinone + NADH + H(+) = a quinol + NAD(+). It carries out the reaction a quinone + NADPH + H(+) = a quinol + NADP(+). The polypeptide is NAD(P)H dehydrogenase (quinone) (Aromatoleum aromaticum (strain DSM 19018 / LMG 30748 / EbN1) (Azoarcus sp. (strain EbN1))).